We begin with the raw amino-acid sequence, 332 residues long: Ketol-acid reductoisomerase (NADP(+)) (332 aa).

In terms of domain architecture, KARI N-terminal Rossmann spans 2–182 (ANIYYDEDAS…GATRAGLIET (181 aa)). NADP(+)-binding positions include 25-28 (YGSQ), Ser-51, Ser-53, and 83-86 (DTVQ). His-108 is an active-site residue. Gly-134 contributes to the NADP(+) binding site. The KARI C-terminal knotted domain maps to 183–327 (TFKEETETDL…KELRKMMPWL (145 aa)). 4 residues coordinate Mg(2+): Asp-191, Glu-195, Glu-227, and Glu-231. Ser-252 serves as a coordination point for substrate.

Belongs to the ketol-acid reductoisomerase family. Requires Mg(2+) as cofactor.

It carries out the reaction (2R)-2,3-dihydroxy-3-methylbutanoate + NADP(+) = (2S)-2-acetolactate + NADPH + H(+). The enzyme catalyses (2R,3R)-2,3-dihydroxy-3-methylpentanoate + NADP(+) = (S)-2-ethyl-2-hydroxy-3-oxobutanoate + NADPH + H(+). Its pathway is amino-acid biosynthesis; L-isoleucine biosynthesis; L-isoleucine from 2-oxobutanoate: step 2/4. The protein operates within amino-acid biosynthesis; L-valine biosynthesis; L-valine from pyruvate: step 2/4. Functionally, involved in the biosynthesis of branched-chain amino acids (BCAA). Catalyzes an alkyl-migration followed by a ketol-acid reduction of (S)-2-acetolactate (S2AL) to yield (R)-2,3-dihydroxy-isovalerate. In the isomerase reaction, S2AL is rearranged via a Mg-dependent methyl migration to produce 3-hydroxy-3-methyl-2-ketobutyrate (HMKB). In the reductase reaction, this 2-ketoacid undergoes a metal-dependent reduction by NADPH to yield (R)-2,3-dihydroxy-isovalerate. This chain is Ketol-acid reductoisomerase (NADP(+)), found in Sulfurihydrogenibium sp. (strain YO3AOP1).